The chain runs to 402 residues: Protein PMR5 (402 aa).

Residues 7 to 23 (LLGISVVSAIFFLVLQQ) traverse the membrane as a helical; Signal-anchor for type II membrane protein segment. Positions 40 to 60 (GSSSGSSGNQYSSSRPSAGFQ) are disordered. The segment covering 41 to 56 (SSSGSSGNQYSSSRPS) has biased composition (low complexity). The GDS motif motif lies at 140 to 142 (GDS). The DCXHWCLPGXXDXWN motif motif lies at 379–393 (DCSHWCLPGLPDTWN).

The protein belongs to the PC-esterase family. TBL subfamily. In terms of tissue distribution, expressed in flowers, siliques, stems and leaves.

Its subcellular location is the membrane. Required for nonhost resistance (NHR) during plant-microbe interactions. Plants mutated in PMR5 are resistant to powdery mildew species. May act as a bridging protein that binds pectin and other cell wall polysaccharides. Probably involved in maintaining esterification of pectins. May be involved in the specific O-acetylation of cell wall polymers. This chain is Protein PMR5 (PMR5), found in Arabidopsis thaliana (Mouse-ear cress).